The chain runs to 302 residues: Formylmethanofuran--tetrahydromethanopterin formyltransferase (302 aa).

The protein belongs to the FTR family. As to quaternary structure, homotetramer.

The protein localises to the cytoplasm. It carries out the reaction N-formylmethanofuran + 5,6,7,8-tetrahydromethanopterin + H(+) = N(5)-formyl-5,6,7,8-tetrahydromethanopterin + methanofuran. It functions in the pathway one-carbon metabolism; formaldehyde degradation; formate from formaldehyde (H(4)MPT route): step 4/5. Functionally, catalyzes the transfer of a formyl group from 5-formyl tetrahydromethanopterin (5-formyl-H(4)MPT) to methanofuran (MFR) to produce formylmethanofuran (formyl-MFR) and tetrahydromethanopterin (H(4)MPT). This Methylobacillus flagellatus (strain ATCC 51484 / DSM 6875 / VKM B-1610 / KT) protein is Formylmethanofuran--tetrahydromethanopterin formyltransferase.